We begin with the raw amino-acid sequence, 210 residues long: ATP-dependent Clp protease proteolytic subunit (210 aa).

Ser-113 serves as the catalytic Nucleophile. His-138 is an active-site residue.

It belongs to the peptidase S14 family. As to quaternary structure, fourteen ClpP subunits assemble into 2 heptameric rings which stack back to back to give a disk-like structure with a central cavity, resembling the structure of eukaryotic proteasomes.

Its subcellular location is the cytoplasm. The catalysed reaction is Hydrolysis of proteins to small peptides in the presence of ATP and magnesium. alpha-casein is the usual test substrate. In the absence of ATP, only oligopeptides shorter than five residues are hydrolyzed (such as succinyl-Leu-Tyr-|-NHMec, and Leu-Tyr-Leu-|-Tyr-Trp, in which cleavage of the -Tyr-|-Leu- and -Tyr-|-Trp bonds also occurs).. In terms of biological role, cleaves peptides in various proteins in a process that requires ATP hydrolysis. Has a chymotrypsin-like activity. Plays a major role in the degradation of misfolded proteins. In Marinomonas sp. (strain MWYL1), this protein is ATP-dependent Clp protease proteolytic subunit.